The chain runs to 140 residues: Nucleoside diphosphate kinase (140 aa).

ATP is bound by residues Lys11, Phe59, Arg87, Thr93, Arg104, and Asn114. His117 (pros-phosphohistidine intermediate) is an active-site residue.

This sequence belongs to the NDK family. Homotetramer. The cofactor is Mg(2+).

Its subcellular location is the cytoplasm. It carries out the reaction a 2'-deoxyribonucleoside 5'-diphosphate + ATP = a 2'-deoxyribonucleoside 5'-triphosphate + ADP. The catalysed reaction is a ribonucleoside 5'-diphosphate + ATP = a ribonucleoside 5'-triphosphate + ADP. Major role in the synthesis of nucleoside triphosphates other than ATP. The ATP gamma phosphate is transferred to the NDP beta phosphate via a ping-pong mechanism, using a phosphorylated active-site intermediate. This chain is Nucleoside diphosphate kinase, found in Rhodopseudomonas palustris (strain BisB18).